A 371-amino-acid chain; its full sequence is UDP-N-acetylglucosamine--N-acetylmuramyl-(pentapeptide) pyrophosphoryl-undecaprenol N-acetylglucosamine transferase (371 aa).

Residues 15 to 17, Asn-126, Arg-172, Ser-199, Ile-256, 275 to 280, and Gln-301 each bind UDP-N-acetyl-alpha-D-glucosamine; these read TGG and ALTVSE.

The protein belongs to the glycosyltransferase 28 family. MurG subfamily.

Its subcellular location is the cell inner membrane. The enzyme catalyses di-trans,octa-cis-undecaprenyl diphospho-N-acetyl-alpha-D-muramoyl-L-alanyl-D-glutamyl-meso-2,6-diaminopimeloyl-D-alanyl-D-alanine + UDP-N-acetyl-alpha-D-glucosamine = di-trans,octa-cis-undecaprenyl diphospho-[N-acetyl-alpha-D-glucosaminyl-(1-&gt;4)]-N-acetyl-alpha-D-muramoyl-L-alanyl-D-glutamyl-meso-2,6-diaminopimeloyl-D-alanyl-D-alanine + UDP + H(+). It functions in the pathway cell wall biogenesis; peptidoglycan biosynthesis. In terms of biological role, cell wall formation. Catalyzes the transfer of a GlcNAc subunit on undecaprenyl-pyrophosphoryl-MurNAc-pentapeptide (lipid intermediate I) to form undecaprenyl-pyrophosphoryl-MurNAc-(pentapeptide)GlcNAc (lipid intermediate II). The protein is UDP-N-acetylglucosamine--N-acetylmuramyl-(pentapeptide) pyrophosphoryl-undecaprenol N-acetylglucosamine transferase of Francisella philomiragia subsp. philomiragia (strain ATCC 25017 / CCUG 19701 / FSC 153 / O#319-036).